A 209-amino-acid chain; its full sequence is Uracil phosphoribosyltransferase (209 aa).

5-phospho-alpha-D-ribose 1-diphosphate contacts are provided by residues Arg79, Arg104, and 131 to 139 (TPVVATANT). Uracil-binding positions include Ile194 and 199–201 (GDA). A 5-phospho-alpha-D-ribose 1-diphosphate-binding site is contributed by Asp200.

The protein belongs to the UPRTase family. It depends on Mg(2+) as a cofactor.

It catalyses the reaction UMP + diphosphate = 5-phospho-alpha-D-ribose 1-diphosphate + uracil. Its pathway is pyrimidine metabolism; UMP biosynthesis via salvage pathway; UMP from uracil: step 1/1. Its activity is regulated as follows. Allosterically activated by GTP. In terms of biological role, catalyzes the conversion of uracil and 5-phospho-alpha-D-ribose 1-diphosphate (PRPP) to UMP and diphosphate. The sequence is that of Uracil phosphoribosyltransferase from Bradyrhizobium diazoefficiens (strain JCM 10833 / BCRC 13528 / IAM 13628 / NBRC 14792 / USDA 110).